The chain runs to 349 residues: Dihydroorotase (349 aa).

Positions 17 and 19 each coordinate Zn(2+). Residues 19–21 (HLR) and Asn45 each bind substrate. Residues Lys103, His140, and His178 each coordinate Zn(2+). Lys103 is subject to N6-carboxylysine. His140 contacts substrate. Residue Leu224 coordinates substrate. Position 252 (Asp252) interacts with Zn(2+). Asp252 is an active-site residue. Positions 256 and 268 each coordinate substrate.

The protein belongs to the metallo-dependent hydrolases superfamily. DHOase family. Class II DHOase subfamily. In terms of assembly, homodimer. The cofactor is Zn(2+).

It carries out the reaction (S)-dihydroorotate + H2O = N-carbamoyl-L-aspartate + H(+). It functions in the pathway pyrimidine metabolism; UMP biosynthesis via de novo pathway; (S)-dihydroorotate from bicarbonate: step 3/3. In terms of biological role, catalyzes the reversible cyclization of carbamoyl aspartate to dihydroorotate. In Buchnera aphidicola subsp. Schizaphis graminum (strain Sg), this protein is Dihydroorotase.